A 149-amino-acid polypeptide reads, in one-letter code: Transcriptional repressor NrdR (149 aa).

A zinc finger lies at 3–34; that stretch reads CPFCSTEETKVIDSRLVSDGYQVRRRRECTKC. Residues 49–139 enclose the ATP-cone domain; sequence PKIIKNNGMR…VYLSFENINE (91 aa).

This sequence belongs to the NrdR family. It depends on Zn(2+) as a cofactor.

In terms of biological role, negatively regulates transcription of bacterial ribonucleotide reductase nrd genes and operons by binding to NrdR-boxes. This chain is Transcriptional repressor NrdR, found in Mannheimia succiniciproducens (strain KCTC 0769BP / MBEL55E).